Here is a 237-residue protein sequence, read N- to C-terminus: Sugar fermentation stimulation protein homolog (237 aa).

This sequence belongs to the SfsA family.

This Pseudomonas savastanoi pv. phaseolicola (strain 1448A / Race 6) (Pseudomonas syringae pv. phaseolicola (strain 1448A / Race 6)) protein is Sugar fermentation stimulation protein homolog.